We begin with the raw amino-acid sequence, 85 residues long: ATP synthase subunit c (85 aa).

The next 2 membrane-spanning stretches (helical) occupy residues 10–30 (IAVG…FALL) and 53–73 (FIIA…ALLF).

Belongs to the ATPase C chain family. In terms of assembly, F-type ATPases have 2 components, F(1) - the catalytic core - and F(0) - the membrane proton channel. F(1) has five subunits: alpha(3), beta(3), gamma(1), delta(1), epsilon(1). F(0) has three main subunits: a(1), b(2) and c(10-14). The alpha and beta chains form an alternating ring which encloses part of the gamma chain. F(1) is attached to F(0) by a central stalk formed by the gamma and epsilon chains, while a peripheral stalk is formed by the delta and b chains.

It localises to the cell inner membrane. F(1)F(0) ATP synthase produces ATP from ADP in the presence of a proton or sodium gradient. F-type ATPases consist of two structural domains, F(1) containing the extramembraneous catalytic core and F(0) containing the membrane proton channel, linked together by a central stalk and a peripheral stalk. During catalysis, ATP synthesis in the catalytic domain of F(1) is coupled via a rotary mechanism of the central stalk subunits to proton translocation. Functionally, key component of the F(0) channel; it plays a direct role in translocation across the membrane. A homomeric c-ring of between 10-14 subunits forms the central stalk rotor element with the F(1) delta and epsilon subunits. In Aliivibrio fischeri (strain ATCC 700601 / ES114) (Vibrio fischeri), this protein is ATP synthase subunit c.